Reading from the N-terminus, the 346-residue chain is 3-isopropylmalate dehydrogenase (346 aa).

Residue 76–87 (GPQWTDPNNRPE) coordinates NAD(+). 4 residues coordinate substrate: Arg-94, Arg-104, Arg-132, and Asp-217. Residues Asp-217, Asp-241, and Asp-245 each coordinate Mg(2+). 275–287 (GSAPDIANQNLAN) provides a ligand contact to NAD(+).

This sequence belongs to the isocitrate and isopropylmalate dehydrogenases family. LeuB type 1 subfamily. As to quaternary structure, homodimer. The cofactor is Mg(2+). Requires Mn(2+) as cofactor.

It localises to the cytoplasm. It catalyses the reaction (2R,3S)-3-isopropylmalate + NAD(+) = 4-methyl-2-oxopentanoate + CO2 + NADH. Its pathway is amino-acid biosynthesis; L-leucine biosynthesis; L-leucine from 3-methyl-2-oxobutanoate: step 3/4. Its function is as follows. Catalyzes the oxidation of 3-carboxy-2-hydroxy-4-methylpentanoate (3-isopropylmalate) to 3-carboxy-4-methyl-2-oxopentanoate. The product decarboxylates to 4-methyl-2 oxopentanoate. The chain is 3-isopropylmalate dehydrogenase from Staphylococcus haemolyticus (strain JCSC1435).